Consider the following 317-residue polypeptide: tRNA-dihydrouridine(16) synthase (317 aa).

Residues 7–9 and glutamine 68 each bind FMN; that span reads PME. Cysteine 98 functions as the Proton donor in the catalytic mechanism. FMN-binding positions include lysine 139, 199–201, and 223–224; these read NGE and GR.

The protein belongs to the Dus family. DusC subfamily. The cofactor is FMN.

The catalysed reaction is 5,6-dihydrouridine(16) in tRNA + NADP(+) = uridine(16) in tRNA + NADPH + H(+). It carries out the reaction 5,6-dihydrouridine(16) in tRNA + NAD(+) = uridine(16) in tRNA + NADH + H(+). In terms of biological role, catalyzes the synthesis of 5,6-dihydrouridine (D), a modified base found in the D-loop of most tRNAs, via the reduction of the C5-C6 double bond in target uridines. Specifically modifies U16 in tRNAs. The chain is tRNA-dihydrouridine(16) synthase from Pseudomonas syringae pv. tomato (strain ATCC BAA-871 / DC3000).